The chain runs to 180 residues: Large ribosomal subunit protein eL20 (180 aa).

Belongs to the eukaryotic ribosomal protein eL20 family.

In Caenorhabditis elegans, this protein is Large ribosomal subunit protein eL20.